Consider the following 101-residue polypeptide: NAD(P)H-quinone oxidoreductase subunit 4L, chloroplastic (101 aa).

The next 3 membrane-spanning stretches (helical) occupy residues 2-22, 32-52, and 61-81; these read MLEH…FGLI, MCLE…SHLF, and IFSI…LAIV.

This sequence belongs to the complex I subunit 4L family. As to quaternary structure, NDH is composed of at least 16 different subunits, 5 of which are encoded in the nucleus.

It localises to the plastid. It is found in the chloroplast thylakoid membrane. The catalysed reaction is a plastoquinone + NADH + (n+1) H(+)(in) = a plastoquinol + NAD(+) + n H(+)(out). It catalyses the reaction a plastoquinone + NADPH + (n+1) H(+)(in) = a plastoquinol + NADP(+) + n H(+)(out). Its function is as follows. NDH shuttles electrons from NAD(P)H:plastoquinone, via FMN and iron-sulfur (Fe-S) centers, to quinones in the photosynthetic chain and possibly in a chloroplast respiratory chain. The immediate electron acceptor for the enzyme in this species is believed to be plastoquinone. Couples the redox reaction to proton translocation, and thus conserves the redox energy in a proton gradient. This chain is NAD(P)H-quinone oxidoreductase subunit 4L, chloroplastic, found in Piper cenocladum (Ant piper).